Reading from the N-terminus, the 362-residue chain is Guanine nucleotide-binding protein alpha-10 subunit (362 aa).

Glycine 2 carries N-myristoyl glycine lipidation. The S-palmitoyl cysteine moiety is linked to residue cysteine 4. One can recognise a G-alpha domain in the interval 35 to 362; sequence LEQSVLLIGP…QENLKDTGMI (328 aa). The tract at residues 38-51 is G1 motif; it reads SVLLIGPGESGKST. GTP contacts are provided by residues 43–50, 184–190, 209–213, 278–281, and alanine 335; these read GPGESGKS, VRIRVPT, DCGGQ, and NKID. Serine 50 and threonine 190 together coordinate Mg(2+). The segment at 182-190 is G2 motif; that stretch reads DIVRIRVPT. The segment at 205 to 214 is G3 motif; the sequence is LSVIDCGGQR. Residues 274–281 are G4 motif; that stretch reads ILFLNKID. The tract at residues 333 to 337 is G5 motif; sequence TCAIS.

This sequence belongs to the G-alpha family. As to quaternary structure, g proteins are composed of 3 units; alpha, beta and gamma. The alpha chain contains the guanine nucleotide binding site.

Guanine nucleotide-binding proteins (G proteins) are involved as modulators or transducers in various transmembrane signaling systems. The protein is Guanine nucleotide-binding protein alpha-10 subunit (gpa-10) of Caenorhabditis briggsae.